The chain runs to 557 residues: Formate--tetrahydrofolate ligase (557 aa).

65-72 (SPAGEGKT) is a binding site for ATP.

Belongs to the formate--tetrahydrofolate ligase family.

The enzyme catalyses (6S)-5,6,7,8-tetrahydrofolate + formate + ATP = (6R)-10-formyltetrahydrofolate + ADP + phosphate. Its pathway is one-carbon metabolism; tetrahydrofolate interconversion. The chain is Formate--tetrahydrofolate ligase from Methylobacillus flagellatus (strain ATCC 51484 / DSM 6875 / VKM B-1610 / KT).